The primary structure comprises 616 residues: MATIQSETDCYDIIEVLGKGTFGEVAKGWRRSTGEMVAIKILKNDAYRSRIIKNELKLLRCVRGLDPDEAHVIRFLEFFHDALKFYLVFELLEQNLFEFQKENNFAPLPARHIRTVTLQVLRALARLKELAIIHADLKPENIMLVDQTRCPFRVKVIDFGSASIFSEVRYVKEPYIQSRFYRAPEILLGLPFCEKVDVWSLGCVMAELHLGWPLYPGNNEYDQVRYICETQGLPKPHLLHAARKAHHFFKRNPHPDATNPWQLKSSADYLAETKVRPLERRKYMLKSLDQIETVNGGGAVNRLSFPDREALAEHADLKSMVELIKRMLTWESHERISPSAALRHPFVSMQQLRSAHEATRYYQLSLRGCRLSLQVDGKPPPPVIANAEDGPPYYRLAEEEETAGLGGVTGSGSFFREDKAPGMQRAIDQLDDLSLQEARRGLWSDTRADMVSDMLAPLKVATTSHRVPDSGPEPILAFYGSRLTGRHKARKAPAGSKSDSNFSNLIRLSQASPEDAGSCRGSGWEEGEGHTTSTEPSAIPQREGDGPSIKDRPMDAERSGPELFDPSGCPGEWLNEPEWTLEGIRGSRAQGLPARHPHPHGPPRTTSFLQHVGGHH.

One can recognise a Protein kinase domain in the interval 11-347 (YDIIEVLGKG…PSAALRHPFV (337 aa)). Residues 17–25 (LGKGTFGEV) and K40 each bind ATP. Residue D136 is the Proton acceptor of the active site. The disordered stretch occupies residues 487–616 (HKARKAPAGS…SFLQHVGGHH (130 aa)). A compositionally biased stretch (polar residues) spans 497–512 (KSDSNFSNLIRLSQAS). A Phosphoserine modification is found at S512. The span at 542 to 560 (REGDGPSIKDRPMDAERSG) shows a compositional bias: basic and acidic residues.

The protein belongs to the protein kinase superfamily. CMGC Ser/Thr protein kinase family. HIPK subfamily. Autophosphorylated.

The protein localises to the cytoplasm. It carries out the reaction L-seryl-[protein] + ATP = O-phospho-L-seryl-[protein] + ADP + H(+). It catalyses the reaction L-threonyl-[protein] + ATP = O-phospho-L-threonyl-[protein] + ADP + H(+). In terms of biological role, protein kinase that phosphorylates TP53, and thus induces TP53 repression of BIRC5 promoter. May act as a corepressor of transcription factors (Potential). This is Homeodomain-interacting protein kinase 4 (Hipk4) from Rattus norvegicus (Rat).